The primary structure comprises 229 residues: Glutathione S-transferase 3 (229 aa).

The residue at position 2 (alanine 2) is a Blocked amino end (Ala). In terms of domain architecture, GST N-terminal spans alanine 3 to glycine 83. Residues tyrosine 9, glutamine 54–valine 55, and glutamine 67–threonine 68 each bind glutathione. Positions aspartate 85–isoleucine 207 constitute a GST C-terminal domain.

The protein belongs to the GST superfamily. Alpha family. In terms of assembly, homodimer or heterodimer (with a subunit from group CL-4).

The protein localises to the cytoplasm. The catalysed reaction is RX + glutathione = an S-substituted glutathione + a halide anion + H(+). Catalyzes the conjugation of GSH to a wide variety of electrophilic alkylating agents. Also involved in the metabolism of lipid hydroperoxides, prostaglandins and leukotriene A4 and in binding of non-substrate hydrophobic ligands such as bile acids, a number of drugs and thyroid hormones. This GST does not exhibit peroxidase activity. The protein is Glutathione S-transferase 3 of Gallus gallus (Chicken).